A 194-amino-acid polypeptide reads, in one-letter code: Adenylate kinase isoenzyme 1 (194 aa).

At A2 the chain carries N-acetylalanine. Residue 18–23 (GSGKGT) participates in ATP binding. Residues 38-67 (SSGDLLRAEVASGSERGKQLQAIMQKGELV) are NMP. AMP is bound by residues S39, R44, 65–67 (ELV), 94–97 (GYPR), and Q101. Residues 131–141 (KRGQTSGRSDD) are LID. R132 lines the ATP pocket. R138 and R149 together coordinate AMP. Residue L177 participates in ATP binding.

It belongs to the adenylate kinase family. AK1 subfamily. As to quaternary structure, monomer. Mg(2+) is required as a cofactor.

The protein localises to the cytoplasm. It carries out the reaction a ribonucleoside 5'-phosphate + ATP = a ribonucleoside 5'-diphosphate + ADP. It catalyses the reaction AMP + ATP = 2 ADP. The enzyme catalyses dAMP + ATP = dADP + ADP. The catalysed reaction is dATP + AMP = dADP + ADP. It carries out the reaction dAMP + dATP = 2 dADP. It catalyses the reaction a 2'-deoxyribonucleoside 5'-diphosphate + ATP = a 2'-deoxyribonucleoside 5'-triphosphate + ADP. The enzyme catalyses a ribonucleoside 5'-diphosphate + ATP = a ribonucleoside 5'-triphosphate + ADP. The catalysed reaction is CDP + GTP = CTP + GDP. It carries out the reaction GDP + ATP = GTP + ADP. It catalyses the reaction UDP + ATP = UTP + ADP. The enzyme catalyses GTP + UDP = UTP + GDP. The catalysed reaction is dTDP + GTP = dTTP + GDP. It carries out the reaction dCDP + GTP = dCTP + GDP. It catalyses the reaction dGDP + ATP = dGTP + ADP. The enzyme catalyses dADP + GTP = dATP + GDP. The catalysed reaction is thiamine diphosphate + ADP = thiamine triphosphate + AMP. Functionally, catalyzes the reversible transfer of the terminal phosphate group between ATP and AMP. Also displays broad nucleoside diphosphate kinase activity. Plays an important role in cellular energy homeostasis and in adenine nucleotide metabolism. Also catalyzes at a very low rate the synthesis of thiamine triphosphate (ThTP) from thiamine diphosphate (ThDP) and ADP. This Cyprinus carpio (Common carp) protein is Adenylate kinase isoenzyme 1 (ak1).